Here is a 242-residue protein sequence, read N- to C-terminus: Thaumatin-like protein 2 (242 aa).

The signal sequence occupies residues 1–23 (MMKTLGAVLSLSLTLLSFGGAHA). 8 disulfide bridges follow: cysteine 32-cysteine 241, cysteine 77-cysteine 87, cysteine 92-cysteine 99, cysteine 147-cysteine 230, cysteine 152-cysteine 213, cysteine 160-cysteine 176, cysteine 180-cysteine 189, and cysteine 190-cysteine 200.

It belongs to the thaumatin family. In terms of tissue distribution, preferentially expressed in the abscission zone of fruit. Also expressed in leaf abscission zone.

Its subcellular location is the secreted. Functionally, may be involved in protecting plant tissues from pathogen infection. This is Thaumatin-like protein 2 from Prunus persica (Peach).